The primary structure comprises 179 residues: uncharacterized protein (179 aa).

Positions 21–109 (QQDAVILVDV…WKQAGLPTVK (89 aa)) constitute a Rhodanese domain. The next 2 membrane-spanning stretches (helical) occupy residues 115 to 135 (ISIMRQVQIIAGSLVLTGVLL) and 138 to 158 (FVAPGFYFLSGFVGAGLLFAG).

It localises to the cell membrane. This is an uncharacterized protein from Synechocystis sp. (strain ATCC 27184 / PCC 6803 / Kazusa).